Reading from the N-terminus, the 343-residue chain is Putative KilA-N domain-containing protein R904 (343 aa).

Residues 51–157 (EFSWGNYLNL…IKASVIINDY (107 aa)) enclose the KilA-N domain. A coiled-coil region spans residues 159 to 279 (AKQMFKEHEK…NAVKEYKELY (121 aa)).

The chain is Putative KilA-N domain-containing protein R904 from Acanthamoeba polyphaga mimivirus (APMV).